A 166-amino-acid chain; its full sequence is MAKVETKNEGLVEKLVAVDRVAKVVKGGRIFSFTALTVVGDGNGRVGFGRGKAREVPAAISKALEAARRNMITVDLAGTTLQHPVNARHGASRVYMQPASEGTGVIAGGAMRAVLEAAGVHNVLAKCYGSTNAANVVNATFKGLRDMTSPEKVAAKRGKSVEEIQG.

In terms of domain architecture, S5 DRBM spans 11 to 74 (LVEKLVAVDR…EAARRNMITV (64 aa)).

The protein belongs to the universal ribosomal protein uS5 family. In terms of assembly, part of the 30S ribosomal subunit. Contacts proteins S4 and S8.

With S4 and S12 plays an important role in translational accuracy. In terms of biological role, located at the back of the 30S subunit body where it stabilizes the conformation of the head with respect to the body. The protein is Small ribosomal subunit protein uS5 of Acinetobacter baumannii (strain ATCC 17978 / DSM 105126 / CIP 53.77 / LMG 1025 / NCDC KC755 / 5377).